Here is a 409-residue protein sequence, read N- to C-terminus: Serine hydroxymethyltransferase (409 aa).

(6S)-5,6,7,8-tetrahydrofolate contacts are provided by residues Leu116 and 120-122 (GHL). Residue Lys225 is modified to N6-(pyridoxal phosphate)lysine.

Belongs to the SHMT family. In terms of assembly, homodimer. The cofactor is pyridoxal 5'-phosphate.

It is found in the cytoplasm. The enzyme catalyses (6R)-5,10-methylene-5,6,7,8-tetrahydrofolate + glycine + H2O = (6S)-5,6,7,8-tetrahydrofolate + L-serine. It functions in the pathway one-carbon metabolism; tetrahydrofolate interconversion. The protein operates within amino-acid biosynthesis; glycine biosynthesis; glycine from L-serine: step 1/1. Catalyzes the reversible interconversion of serine and glycine with tetrahydrofolate (THF) serving as the one-carbon carrier. This reaction serves as the major source of one-carbon groups required for the biosynthesis of purines, thymidylate, methionine, and other important biomolecules. Also exhibits THF-independent aldolase activity toward beta-hydroxyamino acids, producing glycine and aldehydes, via a retro-aldol mechanism. The sequence is that of Serine hydroxymethyltransferase from Acholeplasma laidlawii (strain PG-8A).